Here is a 301-residue protein sequence, read N- to C-terminus: Mitochondrial import receptor subunit TOM40 homolog (301 aa).

Residues 1 to 20 form a disordered region; that stretch reads MATPTESEFAAPIPQTNPGS.

This sequence belongs to the Tom40 family. Forms part of the preprotein translocase complex of the outer mitochondrial membrane (TOM complex). Interacts with mitochondrial targeting sequences.

The protein localises to the mitochondrion outer membrane. Its function is as follows. Channel-forming protein essential for import of protein precursors into mitochondria. Specifically required for nnt-1 accumulation in the mitochondria and may be involved in the secretion of daf-28/insulin from the mitochondria. Required for embryonic and larval development. In Caenorhabditis briggsae, this protein is Mitochondrial import receptor subunit TOM40 homolog.